A 197-amino-acid chain; its full sequence is Potassium-transporting ATPase KdpC subunit (197 aa).

Residues 7–27 form a helical membrane-spanning segment; that stretch reads PAFISLILFTLLFGLIYPLTV.

The protein belongs to the KdpC family. The system is composed of three essential subunits: KdpA, KdpB and KdpC.

The protein resides in the cell inner membrane. Part of the high-affinity ATP-driven potassium transport (or Kdp) system, which catalyzes the hydrolysis of ATP coupled with the electrogenic transport of potassium into the cytoplasm. This subunit acts as a catalytic chaperone that increases the ATP-binding affinity of the ATP-hydrolyzing subunit KdpB by the formation of a transient KdpB/KdpC/ATP ternary complex. The chain is Potassium-transporting ATPase KdpC subunit from Beijerinckia indica subsp. indica (strain ATCC 9039 / DSM 1715 / NCIMB 8712).